A 179-amino-acid polypeptide reads, in one-letter code: Inosine/xanthosine triphosphatase (179 aa).

A substrate-binding site is contributed by 8–13 (TTNPAK). Asp38 and Glu68 together coordinate Mg(2+). 68 to 69 (EA) is a binding site for substrate.

It belongs to the YjjX NTPase family. As to quaternary structure, homodimer. It depends on Mg(2+) as a cofactor. Requires Mn(2+) as cofactor.

The enzyme catalyses XTP + H2O = XDP + phosphate + H(+). The catalysed reaction is ITP + H2O = IDP + phosphate + H(+). Its function is as follows. Phosphatase that hydrolyzes non-canonical purine nucleotides such as XTP and ITP to their respective diphosphate derivatives. Probably excludes non-canonical purines from DNA/RNA precursor pool, thus preventing their incorporation into DNA/RNA and avoiding chromosomal lesions. In Proteus mirabilis (strain HI4320), this protein is Inosine/xanthosine triphosphatase.